A 471-amino-acid chain; its full sequence is Adenosylhomocysteinase (471 aa).

Thr60, Asp135, and Glu196 together coordinate substrate. 197-199 (TTT) contributes to the NAD(+) binding site. Substrate-binding residues include Lys226 and Asp230. Residues Asn231, 260–265 (GYGDVG), Glu283, Asn318, 339–341 (IGH), and Asn387 each bind NAD(+).

Belongs to the adenosylhomocysteinase family. NAD(+) serves as cofactor.

The protein localises to the cytoplasm. It catalyses the reaction S-adenosyl-L-homocysteine + H2O = L-homocysteine + adenosine. The protein operates within amino-acid biosynthesis; L-homocysteine biosynthesis; L-homocysteine from S-adenosyl-L-homocysteine: step 1/1. Its function is as follows. May play a key role in the regulation of the intracellular concentration of adenosylhomocysteine. The protein is Adenosylhomocysteinase of Chlorobium phaeobacteroides (strain DSM 266 / SMG 266 / 2430).